Consider the following 657-residue polypeptide: Glycogen debranching enzyme (657 aa).

Residue aspartate 336 is the Nucleophile of the active site. Glutamate 371 (proton donor) is an active-site residue. The disordered stretch occupies residues 460-481 (ANGEENRDGTNNNYSNNHGKEG).

This sequence belongs to the glycosyl hydrolase 13 family.

It catalyses the reaction Hydrolysis of (1-&gt;6)-alpha-D-glucosidic linkages to branches with degrees of polymerization of three or four glucose residues in limit dextrin.. Its pathway is glycan degradation; glycogen degradation. Its function is as follows. Removes maltotriose and maltotetraose chains that are attached by 1,6-alpha-linkage to the limit dextrin main chain, generating a debranched limit dextrin. This is Glycogen debranching enzyme from Escherichia coli O157:H7.